The following is a 176-amino-acid chain: ATP-dependent protease subunit HslV (176 aa).

Residue T2 is part of the active site. Na(+) is bound by residues G157, C160, and T163.

The protein belongs to the peptidase T1B family. HslV subfamily. In terms of assembly, a double ring-shaped homohexamer of HslV is capped on each side by a ring-shaped HslU homohexamer. The assembly of the HslU/HslV complex is dependent on binding of ATP.

It is found in the cytoplasm. It catalyses the reaction ATP-dependent cleavage of peptide bonds with broad specificity.. Its activity is regulated as follows. Allosterically activated by HslU binding. Its function is as follows. Protease subunit of a proteasome-like degradation complex believed to be a general protein degrading machinery. The sequence is that of ATP-dependent protease subunit HslV from Pseudomonas putida (strain ATCC 47054 / DSM 6125 / CFBP 8728 / NCIMB 11950 / KT2440).